Consider the following 177-residue polypeptide: Small ribosomal subunit protein uS4 (177 aa).

Positions 104-168 (RRLQTLVFRK…SPMASESHPE (65 aa)) constitute an S4 RNA-binding domain. A disordered region spans residues 157–177 (PNSPMASESHPERTDSVKDAE). Positions 165-177 (SHPERTDSVKDAE) are enriched in basic and acidic residues.

This sequence belongs to the universal ribosomal protein uS4 family. In terms of assembly, part of the 30S ribosomal subunit. Contacts protein S5. The interaction surface between S4 and S5 is involved in control of translational fidelity.

Its function is as follows. One of the primary rRNA binding proteins, it binds directly to 16S rRNA where it nucleates assembly of the body of the 30S subunit. In terms of biological role, with S5 and S12 plays an important role in translational accuracy. This is Small ribosomal subunit protein uS4 from Methanococcus aeolicus (strain ATCC BAA-1280 / DSM 17508 / OCM 812 / Nankai-3).